Reading from the N-terminus, the 337-residue chain is MAAKNRTIKVAINGFGRIGRLVFRSLLSKANVEVVAINDLTQPEVLAHLLKYDSAHGELKRKITVKQNILQIDRKKVYVFSEKDPQNLPWDEHDIDVVIESTGRFVSEEGASLHLKAGAKRVIISAPAKEKTIRTVVYNVNHKTISSDDKIISAASCTTNCLAPLVHVLEKNFGIVYGTMLTVHAYTADQRLQDAPHNDLRRARAAAVNIVPTTTGAAKAIGLVVPEANGKLNGMSLRVPVLTGSIVELSVVLEKSPSVEQVNQAMKRFASASFKYCEDPIVSSDVVSSEYGSIFDSKLTNIVEVDGMKLYKVYAWYDNESSYVHQLVRVVSYCAKL.

NAD(+) is bound by residues 17–18 (RI), D39, K83, and S125. Residues 156–158 (SCT), T187, R202, 215–216 (TG), and R238 contribute to the D-glyceraldehyde 3-phosphate site. Catalysis depends on C157, which acts as the Nucleophile. Residue N319 participates in NAD(+) binding.

This sequence belongs to the glyceraldehyde-3-phosphate dehydrogenase family. Homotetramer.

The protein localises to the cytoplasm. The enzyme catalyses D-glyceraldehyde 3-phosphate + phosphate + NAD(+) = (2R)-3-phospho-glyceroyl phosphate + NADH + H(+). Its pathway is carbohydrate degradation; glycolysis; pyruvate from D-glyceraldehyde 3-phosphate: step 1/5. In terms of biological role, catalyzes the oxidative phosphorylation of glyceraldehyde 3-phosphate (G3P) to 1,3-bisphosphoglycerate (BPG) using the cofactor NAD. The first reaction step involves the formation of a hemiacetal intermediate between G3P and a cysteine residue, and this hemiacetal intermediate is then oxidized to a thioester, with concomitant reduction of NAD to NADH. The reduced NADH is then exchanged with the second NAD, and the thioester is attacked by a nucleophilic inorganic phosphate to produce BPG. This Mycoplasma genitalium (strain ATCC 33530 / DSM 19775 / NCTC 10195 / G37) (Mycoplasmoides genitalium) protein is Glyceraldehyde-3-phosphate dehydrogenase (gapA).